We begin with the raw amino-acid sequence, 776 residues long: Serine/threonine-protein kinase-like protein CCR2 (776 aa).

Residues 1 to 22 (MQPNSHIFVIITISSLIITVSA) form the signal peptide. Topologically, residues 23–432 (YGSTGTIAAA…QKEQREVRRL (410 aa)) are extracellular. 8 N-linked (GlcNAc...) asparagine glycosylation sites follow: N59, N92, N154, N162, N205, N278, N287, and N350. A TNFR-Cys repeat occupies 341-396 (NCGDGWFAFNASILKESELTSLCSFHNLNICLRCGISCLEGYFPSSTCNPNADRVC). 3 disulfide bridges follow: C342-C371, C374-C388, and C378-C396. N404 carries an N-linked (GlcNAc...) asparagine glycan. Residues 433-453 (VIIIGCSVLGFLVMLIGLSFI) form a helical membrane-spanning segment. Over 454-776 (PKMTKGSKRD…DLIVKSGLTF (323 aa)) the chain is Cytoplasmic. The Protein kinase domain maps to 519–776 (FKEFNELGRG…DLIVKSGLTF (258 aa)). ATP-binding positions include 525–533 (LGRGSFGFV) and K547. The Proton acceptor role is filled by D644.

Belongs to the protein kinase superfamily. Ser/Thr protein kinase family. Homodimer. In terms of tissue distribution, expressed in roots, leaves, shoot apical meristems (SAM), and floral buds.

It localises to the membrane. It carries out the reaction L-seryl-[protein] + ATP = O-phospho-L-seryl-[protein] + ADP + H(+). It catalyses the reaction L-threonyl-[protein] + ATP = O-phospho-L-threonyl-[protein] + ADP + H(+). Serine/threonine-protein kinase with low activity. This Arabidopsis thaliana (Mouse-ear cress) protein is Serine/threonine-protein kinase-like protein CCR2 (CCR2).